The following is a 164-amino-acid chain: Thiol peroxidase (164 aa).

The Thioredoxin domain occupies 16-162 (LQVGDIAKDF…YEAAINAAKI (147 aa)). C58 functions as the Cysteine sulfenic acid (-SOH) intermediate in the catalytic mechanism. The cysteines at positions 58 and 92 are disulfide-linked.

It belongs to the peroxiredoxin family. Tpx subfamily. As to quaternary structure, homodimer.

The catalysed reaction is a hydroperoxide + [thioredoxin]-dithiol = an alcohol + [thioredoxin]-disulfide + H2O. Thiol-specific peroxidase that catalyzes the reduction of hydrogen peroxide and organic hydroperoxides to water and alcohols, respectively. Plays a role in cell protection against oxidative stress by detoxifying peroxides. The protein is Thiol peroxidase of Streptococcus agalactiae serotype III (strain NEM316).